The following is a 275-amino-acid chain: 4-hydroxy-tetrahydrodipicolinate reductase (275 aa).

Residue 12–17 participates in NAD(+) binding; it reads GAAGRM. NADP(+) is bound at residue R39. Residues 102-104 and 126-129 each bind NAD(+); these read GTT and SGNM. H160 acts as the Proton donor/acceptor in catalysis. H161 provides a ligand contact to (S)-2,3,4,5-tetrahydrodipicolinate. The active-site Proton donor is the K164. 170–171 contacts (S)-2,3,4,5-tetrahydrodipicolinate; it reads GT.

Belongs to the DapB family.

The protein localises to the cytoplasm. It catalyses the reaction (S)-2,3,4,5-tetrahydrodipicolinate + NAD(+) + H2O = (2S,4S)-4-hydroxy-2,3,4,5-tetrahydrodipicolinate + NADH + H(+). It carries out the reaction (S)-2,3,4,5-tetrahydrodipicolinate + NADP(+) + H2O = (2S,4S)-4-hydroxy-2,3,4,5-tetrahydrodipicolinate + NADPH + H(+). Its pathway is amino-acid biosynthesis; L-lysine biosynthesis via DAP pathway; (S)-tetrahydrodipicolinate from L-aspartate: step 4/4. In terms of biological role, catalyzes the conversion of 4-hydroxy-tetrahydrodipicolinate (HTPA) to tetrahydrodipicolinate. In Agrobacterium fabrum (strain C58 / ATCC 33970) (Agrobacterium tumefaciens (strain C58)), this protein is 4-hydroxy-tetrahydrodipicolinate reductase.